Here is a 249-residue protein sequence, read N- to C-terminus: Phycobilisome 27.9 kDa linker polypeptide, phycoerythrin-associated, rod (249 aa).

Positions 2 to 166 (ASQTILELWP…LDRGPAQIDS (165 aa)) constitute a PBS-linker domain. In terms of domain architecture, CpcD-like spans 198–248 (EKRFKILVQGSKFDSPRRISTTEYIVPASKMTPQIQRINRTSGKIVSITEI).

The protein belongs to the phycobilisome linker protein family. As to quaternary structure, the phycobilisome is a hemidiscoidal structure that is composed of two distinct substructures: a core complex and six rods radiating from the core.

The protein resides in the cellular thylakoid membrane. Rod linker protein, associated with phycoerythrin. Linker polypeptides determine the state of aggregation and the location of the disk-shaped phycobiliprotein units within the phycobilisome and modulate their spectroscopic properties in order to mediate a directed and optimal energy transfer. In Microchaete diplosiphon (Fremyella diplosiphon), this protein is Phycobilisome 27.9 kDa linker polypeptide, phycoerythrin-associated, rod (cpeD).